The primary structure comprises 643 residues: Threonine--tRNA ligase (643 aa).

In terms of domain architecture, TGS spans 1–61 (MIKVTLKDGS…KEDVSLSICT (61 aa)). The tract at residues 240-540 (DHNKLGRELK…LIEKYAGAFP (301 aa)) is catalytic. Zn(2+) is bound by residues C335, H386, and H517.

The protein belongs to the class-II aminoacyl-tRNA synthetase family. As to quaternary structure, homodimer. The cofactor is Zn(2+).

The protein resides in the cytoplasm. The catalysed reaction is tRNA(Thr) + L-threonine + ATP = L-threonyl-tRNA(Thr) + AMP + diphosphate + H(+). Functionally, catalyzes the attachment of threonine to tRNA(Thr) in a two-step reaction: L-threonine is first activated by ATP to form Thr-AMP and then transferred to the acceptor end of tRNA(Thr). Also edits incorrectly charged L-seryl-tRNA(Thr). The polypeptide is Threonine--tRNA ligase (Clostridium botulinum (strain Eklund 17B / Type B)).